The primary structure comprises 1037 residues: Probable inorganic carbon transporter subunit DabA 1 (1037 aa).

Residues Cys-460, Asp-462, His-719, and Cys-734 each contribute to the Zn(2+) site.

Belongs to the inorganic carbon transporter (TC 9.A.2) DabA family. Forms a complex with DabB. Requires Zn(2+) as cofactor.

Its subcellular location is the cell inner membrane. In terms of biological role, part of an energy-coupled inorganic carbon pump. The sequence is that of Probable inorganic carbon transporter subunit DabA 1 from Nitrobacter winogradskyi (strain ATCC 25391 / DSM 10237 / CIP 104748 / NCIMB 11846 / Nb-255).